Consider the following 134-residue polypeptide: Methylglyoxal synthase (134 aa).

Residues 1-134 (MHIALIAHDE…DWRDLRRNDE (134 aa)) form the MGS-like domain. Residues histidine 8, lysine 12, 34–37 (TGTT), and 54–55 (SG) contribute to the substrate site. The Proton donor/acceptor role is filled by aspartate 60. Residue histidine 87 coordinates substrate.

This sequence belongs to the methylglyoxal synthase family.

It catalyses the reaction dihydroxyacetone phosphate = methylglyoxal + phosphate. In terms of biological role, catalyzes the formation of methylglyoxal from dihydroxyacetone phosphate. This Listeria monocytogenes serotype 4b (strain CLIP80459) protein is Methylglyoxal synthase.